The chain runs to 113 residues: Large ribosomal subunit protein uL22 (113 aa).

It belongs to the universal ribosomal protein uL22 family. As to quaternary structure, part of the 50S ribosomal subunit.

This protein binds specifically to 23S rRNA; its binding is stimulated by other ribosomal proteins, e.g. L4, L17, and L20. It is important during the early stages of 50S assembly. It makes multiple contacts with different domains of the 23S rRNA in the assembled 50S subunit and ribosome. In terms of biological role, the globular domain of the protein is located near the polypeptide exit tunnel on the outside of the subunit, while an extended beta-hairpin is found that lines the wall of the exit tunnel in the center of the 70S ribosome. The chain is Large ribosomal subunit protein uL22 from Symbiobacterium thermophilum (strain DSM 24528 / JCM 14929 / IAM 14863 / T).